Reading from the N-terminus, the 246-residue chain is 14-3-3 protein beta/alpha (246 aa).

Residue M1 is modified to N-acetylmethionine. Residue T2 is modified to N-acetylthreonine; in 14-3-3 protein beta/alpha, N-terminally processed. T2 carries the phosphothreonine modification. Position 5 is an N6-acetyllysine (K5). K51 is subject to N6-acetyllysine; alternate. K51 participates in a covalent cross-link: Glycyl lysine isopeptide (Lys-Gly) (interchain with G-Cter in SUMO2); alternate. Residue S60 is modified to Phosphoserine. K70 is subject to N6-acetyllysine. 3'-nitrotyrosine is present on residues Y84 and Y106. N6-acetyllysine is present on K117. S186 and S232 each carry phosphoserine.

This sequence belongs to the 14-3-3 family. In terms of assembly, homodimer. Interacts with SAMSN1 and PRKCE. Interacts with AKAP13. Interacts with SSH1 and TORC2/CRTC2. Interacts with ABL1; the interaction results in cytoplasmic location of ABL1 and inhibition of cABL-mediated apoptosis. Interacts with ROR2 (dimer); the interaction results in phosphorylation of YWHAB on tyrosine residues. Interacts with GAB2. Interacts with YAP1 (phosphorylated form). Interacts with the phosphorylated (by AKT1) form of SRPK2. Interacts with PKA-phosphorylated AANAT. Interacts with MYO1C. Interacts with SIRT2. Interacts with the 'Thr-369' phosphorylated form of DAPK2. Interacts with PI4KB, TBC1D22A and TBC1D22B. Interacts with the 'Ser-1134' and 'Ser-1161' phosphorylated form of SOS1. Interacts (via phosphorylated form) with YWHAB; this interaction occurs in a protein kinase AKT1-dependent manner. Interacts with SLITRK1. Interacts with SYNPO2 (phosphorylated form); YWHAB competes with ACTN2 for interaction with SYNPO2. Interacts with RIPOR2 (via phosphorylated form); this interaction occurs in a chemokine-dependent manner and does not compete for binding of RIPOR2 with RHOA nor blocks inhibition of RIPOR2-mediated RHOA activity. Interacts with MARK2 and MARK3. Interacts with TESK1; the interaction is dependent on the phosphorylation of TESK1 'Ser-439' and inhibits TESK1 kinase activity. Interacts with MEFV. Interacts with HDAC4. Interacts with ADAM22 (via C-terminus). Post-translationally, isoform alpha differs from isoform beta in being phosphorylated. Phosphorylated on Ser-60 by protein kinase C delta type catalytic subunit in a sphingosine-dependent fashion. In terms of processing, isoform Short contains a N-acetylmethionine at position 1.

The protein localises to the cytoplasm. Its subcellular location is the melanosome. Functionally, adapter protein implicated in the regulation of a large spectrum of both general and specialized signaling pathways. Binds to a large number of partners, usually by recognition of a phosphoserine or phosphothreonine motif. Binding generally results in the modulation of the activity of the binding partner. Negative regulator of osteogenesis. Blocks the nuclear translocation of the phosphorylated form (by AKT1) of SRPK2 and antagonizes its stimulatory effect on cyclin D1 expression resulting in blockage of neuronal apoptosis elicited by SRPK2. Negative regulator of signaling cascades that mediate activation of MAP kinases via AKAP13. This Mus musculus (Mouse) protein is 14-3-3 protein beta/alpha (Ywhab).